A 239-amino-acid chain; its full sequence is Beta-glucanase (239 aa).

Residues 1–25 (MKRVLLILVTGLFMSLCGITSSVSA) form the signal peptide. A GH16 domain is found at 26–239 (QTGGSFFEPF…HYDWMRYRKK (214 aa)). C57 and C86 form a disulfide bridge. E134 acts as the Nucleophile in catalysis.

The protein belongs to the glycosyl hydrolase 16 family.

The catalysed reaction is Hydrolysis of (1-&gt;4)-beta-D-glucosidic linkages in beta-D-glucans containing (1-&gt;3)- and (1-&gt;4)-bonds.. This is Beta-glucanase (bglA) from Bacillus amyloliquefaciens (Bacillus velezensis).